Here is a 528-residue protein sequence, read N- to C-terminus: Protein phosphatase 1 regulatory subunit 16A (528 aa).

The stretch at 18–45 forms a coiled coil; that stretch reads STQERLKHAQKRRAQQVKMWAQAEKEAQ. Residues 19–59 form a disordered region; sequence TQERLKHAQKRRAQQVKMWAQAEKEAQGKKGPGERPRKEAA. Over residues 40 to 58 the composition is skewed to basic and acidic residues; sequence AEKEAQGKKGPGERPRKEA. ANK repeat units follow at residues 70–99, 103–132, 136–165, 231–260, and 264–293; these read PPSVVLLEAAARNDLEEVRQFLGSGVSPDL, DGLTALHQCCIDDFREMVQQLLEAGANINA, ECWTPLHAAATCGHLHLVELLIASGANLLA, HGATLLHVAAANGFSEAAALLLEHRASLSA, and DGWEPLHAAAYWGQVPLVELLVAHGADLNA. 2 disordered regions span residues 330-351 and 367-421; these read RQRSLLRRRTSSAGSRGKVVRR and QEAI…SPVR. Serine 433 is subject to Phosphoserine. A disordered region spans residues 462 to 505; the sequence is QRAAAKLQRPPPEGPESPETAEPGLPGDTVTPQPDCGFRAGGDP. The S-palmitoyl cysteine moiety is linked to residue cysteine 524. Residue cysteine 525 is modified to Cysteine methyl ester. The S-farnesyl cysteine moiety is linked to residue cysteine 525. Residues 526–528 constitute a propeptide, removed in mature form; sequence LLM.

In terms of assembly, binds PP1.

It is found in the cell membrane. Inhibits protein phosphatase 1 activity toward phosphorylase, myosin light chain and myosin substrates. The sequence is that of Protein phosphatase 1 regulatory subunit 16A (PPP1R16A) from Homo sapiens (Human).